The following is a 90-amino-acid chain: uncharacterized protein (90 aa).

It localises to the mitochondrion. This is an uncharacterized protein from Ascobolus immersus.